We begin with the raw amino-acid sequence, 180 residues long: Large ribosomal subunit protein uL16 (180 aa).

This sequence belongs to the universal ribosomal protein uL16 family.

This Hyperthermus butylicus (strain DSM 5456 / JCM 9403 / PLM1-5) protein is Large ribosomal subunit protein uL16.